The chain runs to 1245 residues: Nidogen-1 (1245 aa).

Positions 1-28 (MLDASGCSWAMWTWALLQLLLLVGPGGC) are cleaved as a signal peptide. In terms of domain architecture, NIDO spans 106–268 (PFLADLDTTD…GVWVFEIGSP (163 aa)). The N-linked (GlcNAc...) asparagine glycan is linked to Asn-187. 2 positions are modified to sulfotyrosine: Tyr-290 and Tyr-295. The O-linked (GalNAc...) threonine glycan is linked to Thr-299. The interval 307–344 (VATPSPSHSPRRGYPDPHNVPRILSPGYEATERPRGVP) is disordered. Ser-331 is a glycosylation site (O-linked (GalNAc...) serine). Thr-337 and Thr-345 each carry an O-linked (GalNAc...) threonine glycan. The O-linked (GalNAc...) threonine; partial glycan is linked to Thr-348. An EGF-like 1 domain is found at 384–424 (SQQTCANNRHQCSVHAECRDYATGFCCRCVANYTGNGRQCV). Disulfide bonds link Cys-388-Cys-401, Cys-395-Cys-410, Cys-409-Cys-616, Cys-412-Cys-423, Cys-670-Cys-683, Cys-677-Cys-693, Cys-695-Cys-706, Cys-712-Cys-725, Cys-719-Cys-734, Cys-736-Cys-748, Cys-760-Cys-775, Cys-767-Cys-785, Cys-787-Cys-798, Cys-804-Cys-815, Cys-809-Cys-824, Cys-826-Cys-837, Cys-847-Cys-876, Cys-887-Cys-894, and Cys-896-Cys-917. N-linked (GlcNAc...) asparagine glycosylation is present at Asn-415. Residues 428–665 (SPQRVNGKVK…GPVRDGSPDA (238 aa)) form the Nidogen G2 beta-barrel domain. The EGF-like 2 domain maps to 666 to 707 (LQNPCYIGTHGCDSNAACRPGPGTQFTCECSIGFRGDGQTCY). The Cell attachment site signature appears at 700 to 702 (RGD). The EGF-like 3; calcium-binding domain maps to 708-749 (DIDECSEQPSRCGNHAVCNNLPGTFRCECVEGYHFSDRGTCV). The 44-residue stretch at 756-799 (PINYCETGLHNCDIPQRAQCIYMGGSSYTCSCLPGFSGDGRACR) folds into the EGF-like 4 domain. The 39-residue stretch at 800–838 (DVDECQHSRCHPDAFCYNTPGSFTCQCKPGYQGDGFRCM) folds into the EGF-like 5; calcium-binding domain. The Thyroglobulin type-1 domain occupies 844 to 917 (KTRCQLEREH…RTPPGMRPPC (74 aa)). O-linked (GalNAc...) threonine glycans are attached at residues Thr-920 and Thr-933. LDL-receptor class B repeat units follow at residues 988-1030 (KVVY…DHLG), 1031-1073 (RTIF…DPVR), 1074-1118 (GNLY…DAFS), and 1119-1160 (SQLC…YGKN). One can recognise an EGF-like 6 domain in the interval 1206 to 1242 (GHNYCSVNNGGCTHLCLPTPGSRTCRCPDNTLGVDCI). 3 disulfide bridges follow: Cys-1210–Cys-1221, Cys-1217–Cys-1230, and Cys-1232–Cys-1241.

As to quaternary structure, interacts with FBLN1. Interacts with LGALS3BP. Interacts with PLXDC1. Interacts with SVEP1. N- and O-glycosylated.

The protein localises to the secreted. It is found in the extracellular space. The protein resides in the extracellular matrix. It localises to the basement membrane. In terms of biological role, sulfated glycoprotein widely distributed in basement membranes and tightly associated with laminin. Also binds to collagen IV and perlecan. It probably has a role in cell-extracellular matrix interactions. This chain is Nidogen-1 (Nid1), found in Mus musculus (Mouse).